The chain runs to 87 residues: uncharacterized protein (87 aa).

The next 2 membrane-spanning stretches (helical) occupy residues 7–27 (LFFI…LYSI) and 64–84 (GINI…IPLF).

Its subcellular location is the membrane. This is an uncharacterized protein from Schizosaccharomyces pombe (strain 972 / ATCC 24843) (Fission yeast).